Consider the following 166-residue polypeptide: Phospholipase A2 inhibitor CgMIP-II (166 aa).

The N-terminal stretch at Met1–Gly19 is a signal peptide. Positions Leu46 to Glu161 constitute a C-type lectin domain. 2 cysteine pairs are disulfide-bonded: Cys83/Cys160 and Cys138/Cys152. Asn122 carries an N-linked (GlcNAc...) asparagine glycan.

It belongs to the alpha-type phospholipase A2 inhibitor family. As to quaternary structure, homomer composed of 20-25-kDa subunits that form oligomers of 180 kDa. Post-translationally, N-glycosylated. The glycosidic chain may contain superficial sialic acid residues. Expressed by the liver.

It is found in the secreted. Its function is as follows. Selectively inhibits the toxic properties of myotoxin-II from the same venom (AC P81165). Does not inhibit PLA2, anti-coagulant and lethal activities of the basic myotoxin I from the same venom (AC P0DQP6), nor the different crotoxin forms (heterodimer or subunit B alone). Does not block the enzymatic activity of crude acidic PLA2 fractions from the same venom. This chain is Phospholipase A2 inhibitor CgMIP-II, found in Cerrophidion godmani (Porthidium godmani).